We begin with the raw amino-acid sequence, 202 residues long: ATP-dependent Clp protease proteolytic subunit (202 aa).

S101 acts as the Nucleophile in catalysis. H126 is an active-site residue.

The protein belongs to the peptidase S14 family. Component of the chloroplastic Clp protease core complex.

Its subcellular location is the plastid. It localises to the chloroplast stroma. The catalysed reaction is Hydrolysis of proteins to small peptides in the presence of ATP and magnesium. alpha-casein is the usual test substrate. In the absence of ATP, only oligopeptides shorter than five residues are hydrolyzed (such as succinyl-Leu-Tyr-|-NHMec, and Leu-Tyr-Leu-|-Tyr-Trp, in which cleavage of the -Tyr-|-Leu- and -Tyr-|-Trp bonds also occurs).. Functionally, cleaves peptides in various proteins in a process that requires ATP hydrolysis. Has a chymotrypsin-like activity. Plays a major role in the degradation of misfolded proteins. This Nuphar advena (Common spatterdock) protein is ATP-dependent Clp protease proteolytic subunit.